The primary structure comprises 424 residues: UDP-N-acetylglucosamine 1-carboxyvinyltransferase (424 aa).

Phosphoenolpyruvate is bound at residue 22 to 23 (KN). Residue Arg98 participates in UDP-N-acetyl-alpha-D-glucosamine binding. The active-site Proton donor is Cys122. Cys122 is subject to 2-(S-cysteinyl)pyruvic acid O-phosphothioketal. UDP-N-acetyl-alpha-D-glucosamine is bound by residues 127-131 (RPVDQ), Asp312, and Ile334.

This sequence belongs to the EPSP synthase family. MurA subfamily.

The protein localises to the cytoplasm. It carries out the reaction phosphoenolpyruvate + UDP-N-acetyl-alpha-D-glucosamine = UDP-N-acetyl-3-O-(1-carboxyvinyl)-alpha-D-glucosamine + phosphate. Its pathway is cell wall biogenesis; peptidoglycan biosynthesis. In terms of biological role, cell wall formation. Adds enolpyruvyl to UDP-N-acetylglucosamine. The chain is UDP-N-acetylglucosamine 1-carboxyvinyltransferase from Xanthomonas euvesicatoria pv. vesicatoria (strain 85-10) (Xanthomonas campestris pv. vesicatoria).